A 165-amino-acid polypeptide reads, in one-letter code: Thiol peroxidase (165 aa).

Positions 18 to 165 (PQKGAQAPAF…PNYAAALAAL (148 aa)) constitute a Thioredoxin domain. Cys-60 (cysteine sulfenic acid (-SOH) intermediate) is an active-site residue. Cysteines 60 and 94 form a disulfide.

This sequence belongs to the peroxiredoxin family. Tpx subfamily. Homodimer.

It catalyses the reaction a hydroperoxide + [thioredoxin]-dithiol = an alcohol + [thioredoxin]-disulfide + H2O. Its function is as follows. Thiol-specific peroxidase that catalyzes the reduction of hydrogen peroxide and organic hydroperoxides to water and alcohols, respectively. Plays a role in cell protection against oxidative stress by detoxifying peroxides. The chain is Thiol peroxidase from Pseudomonas aeruginosa (strain ATCC 15692 / DSM 22644 / CIP 104116 / JCM 14847 / LMG 12228 / 1C / PRS 101 / PAO1).